The chain runs to 688 residues: Mitochondrial potassium channel ATP-binding subunit (688 aa).

A mitochondrion-targeting transit peptide spans 1-31 (MLFHFLQAGLRQCRPPARLVGLETGLSGARG). 4 helical membrane passes run 115-135 (PQLI…LLNI), 168-188 (LKLL…IVLL), 268-288 (GLLL…GSFL), and 342-362 (VLGV…NCIV). An ABC transmembrane type-1 domain is found at 121–409 (LTAVLLAFGA…MSVLFGQVVR (289 aa)). The 238-residue stretch at 442–679 (IHFKDVSFSY…GGLYADLIRR (238 aa)) folds into the ABC transporter domain. Residue 477 to 484 (GQSGGGKS) participates in ATP binding.

It belongs to the ABC transporter superfamily. ABCB family. Multidrug resistance exporter (TC 3.A.1.201) subfamily. Component of the mitochondrial potassium channel (mitoK(ATP)).

The protein localises to the mitochondrion inner membrane. Its function is as follows. ATP-binding subunit of the mitochondrial ATP-gated potassium channel (mitoK(ATP)). Together with pore-forming subunit CCDC51/MITOK of the mitoK(ATP) channel, mediates ATP-dependent potassium currents across the mitochondrial inner membrane. An increase in ATP intracellular levels closes the channel, inhibiting K(+) transport, whereas a decrease in ATP levels enhances K(+) uptake in the mitochondrial matrix. Plays a role in mitochondrial iron transport. Required for maintenance of normal cardiac function, possibly by influencing mitochondrial iron export and regulating the maturation of cytosolic iron sulfur cluster-containing enzymes. The protein is Mitochondrial potassium channel ATP-binding subunit of Xenopus tropicalis (Western clawed frog).